Here is a 117-residue protein sequence, read N- to C-terminus: Large ribosomal subunit protein eL34 (117 aa).

A Phosphoserine modification is found at Ser-12. N6-acetyllysine is present on residues Lys-36 and Lys-43. Lys-108 participates in a covalent cross-link: Glycyl lysine isopeptide (Lys-Gly) (interchain with G-Cter in SUMO2).

The protein belongs to the eukaryotic ribosomal protein eL34 family. In terms of assembly, component of the large ribosomal subunit.

The protein localises to the cytoplasm. Its subcellular location is the cytosol. The protein resides in the endoplasmic reticulum. Functionally, component of the large ribosomal subunit. The ribosome is a large ribonucleoprotein complex responsible for the synthesis of proteins in the cell. This is Large ribosomal subunit protein eL34 (RPL34) from Sus scrofa (Pig).